Reading from the N-terminus, the 851-residue chain is Venom phosphodiesterase 1 (851 aa).

A signal peptide spans 1–23; the sequence is MIQQKVLFISLVAVTLGLGLGLG. SMB domains lie at 30–73 and 74–118; these read PQVS…VLPT and QSWS…GETS. Intrachain disulfides connect cysteine 34–cysteine 38, cysteine 34–cysteine 51, cysteine 38–cysteine 69, cysteine 49–cysteine 51, cysteine 49–cysteine 62, cysteine 55–cysteine 61, cysteine 62–cysteine 69, cysteine 78–cysteine 83, cysteine 78–cysteine 95, cysteine 83–cysteine 113, cysteine 93–cysteine 95, cysteine 93–cysteine 106, cysteine 99–cysteine 105, cysteine 106–cysteine 113, cysteine 124–cysteine 170, and cysteine 132–cysteine 344. Residue asparagine 39 is glycosylated (N-linked (GlcNAc...) asparagine). A Cell attachment site motif is present at residues 58 to 60; sequence RQA. A divalent metal cation contacts are provided by aspartate 147 and threonine 185. Residue threonine 185 is the AMP-threonine intermediate of the active site. Residues asparagine 216, asparagine 259, and asparagine 270 are each glycosylated (N-linked (GlcNAc...) asparagine). Lysine 271 contributes to the AMP binding site. Residues aspartate 305, histidine 309, aspartate 352, and histidine 353 each contribute to the a divalent metal cation site. Residue histidine 309 participates in AMP binding. 6 disulfides stabilise this stretch: cysteine 360-cysteine 457, cysteine 408-cysteine 793, cysteine 541-cysteine 599, cysteine 554-cysteine 654, cysteine 556-cysteine 639, and cysteine 762-cysteine 772. A glycan (N-linked (GlcNAc...) asparagine) is linked at asparagine 405. Histidine 462 serves as a coordination point for a divalent metal cation. N-linked (GlcNAc...) asparagine glycosylation is found at asparagine 512, asparagine 594, asparagine 674, and asparagine 745.

The protein belongs to the nucleotide pyrophosphatase/phosphodiesterase family. As to quaternary structure, monomer cleaved in two subunits; disulfide-linked. Is synthesized as a single-chain protein and is subsequently cleaved to form a two-subunit protein held together with disulfide bonds. A divalent metal cation serves as cofactor. In terms of tissue distribution, expressed by venom gland.

The protein localises to the secreted. The catalysed reaction is ADP + H2O = AMP + phosphate + H(+). Functionally, hydrolyzes ADP with high activity. Shows weak or no activity on 5'-AMP, 5'-GMP, 3'-AMP, ATP, cAMP, and cGMP. Is devoid of monophosphatase and proteinase activities. Dose-dependently inhibits platelet aggregation induced by ADP and collagen. In Crotalus adamanteus (Eastern diamondback rattlesnake), this protein is Venom phosphodiesterase 1.